The following is a 616-amino-acid chain: MAU2 chromatid cohesion factor homolog (616 aa).

TPR repeat units lie at residues 90-123 (FDTASLLAQLYQQQEQSSLAKPVLRKAIELSQHN), 445-478 (GSFYYVQGLNAFHKSSFHEAKRFLRETLKMANAE), and 485-518 (SCSLVLLSHVFLSIGNSKESMNMVTPAMQLASKI).

It belongs to the SCC4/mau-2 family. Component of the cohesin loading complex.

The protein localises to the nucleus. It localises to the nucleoplasm. Functionally, required for association of the cohesin complex with chromatin during interphase. Plays a role in sister chromatid cohesion and normal progression through prometaphase. The polypeptide is MAU2 chromatid cohesion factor homolog (Culex quinquefasciatus (Southern house mosquito)).